Consider the following 87-residue polypeptide: UPF0250 protein YbeD (87 aa).

The protein belongs to the UPF0250 family.

This is UPF0250 protein YbeD from Shigella boydii serotype 18 (strain CDC 3083-94 / BS512).